We begin with the raw amino-acid sequence, 191 residues long: Protein GrpE (191 aa).

The protein belongs to the GrpE family. In terms of assembly, homodimer.

It is found in the cytoplasm. Functionally, participates actively in the response to hyperosmotic and heat shock by preventing the aggregation of stress-denatured proteins, in association with DnaK and GrpE. It is the nucleotide exchange factor for DnaK and may function as a thermosensor. Unfolded proteins bind initially to DnaJ; upon interaction with the DnaJ-bound protein, DnaK hydrolyzes its bound ATP, resulting in the formation of a stable complex. GrpE releases ADP from DnaK; ATP binding to DnaK triggers the release of the substrate protein, thus completing the reaction cycle. Several rounds of ATP-dependent interactions between DnaJ, DnaK and GrpE are required for fully efficient folding. The polypeptide is Protein GrpE (Listeria welshimeri serovar 6b (strain ATCC 35897 / DSM 20650 / CCUG 15529 / CIP 8149 / NCTC 11857 / SLCC 5334 / V8)).